The sequence spans 315 residues: Protein ORANGE-LIKE, chloroplastic (315 aa).

A chloroplast-targeting transit peptide spans 1 to 16 (MTCFSSATPHRHHLLL). Helical transmembrane passes span 155 to 175 (LYSTSVALISGIIFFGGLIAP) and 207 to 227 (IVASFSGGAVGVISTLMLIEV). A CR-type zinc finger spans residues 225-307 (IEVNNVKQQE…CTGMVTASEH (83 aa)). The stretch at 238–245 (CKYCLGTG) is one CXXCXGXG motif repeat. A CXXCXXXG motif repeat occupies 249-256 (CARCSASG). The CXXCXGXG motif repeat unit spans residues 282–289 (CLNCSGAG). The stretch at 293-300 (CPTCLCTG) is one CXXCXXXG motif repeat.

Belongs to the orange-like family. Interacts with PSY1.

It localises to the plastid. The protein resides in the chloroplast membrane. May be associated with accumulation of carotenoids in chromoplasts. The polypeptide is Protein ORANGE-LIKE, chloroplastic (ORLIKE) (Arabidopsis thaliana (Mouse-ear cress)).